A 243-amino-acid chain; its full sequence is Ribonuclease PH (243 aa).

Residues Arg-91 and 129 to 131 (GTR) contribute to the phosphate site.

It belongs to the RNase PH family. Homohexameric ring arranged as a trimer of dimers.

The catalysed reaction is tRNA(n+1) + phosphate = tRNA(n) + a ribonucleoside 5'-diphosphate. Functionally, phosphorolytic 3'-5' exoribonuclease that plays an important role in tRNA 3'-end maturation. Removes nucleotide residues following the 3'-CCA terminus of tRNAs; can also add nucleotides to the ends of RNA molecules by using nucleoside diphosphates as substrates, but this may not be physiologically important. Probably plays a role in initiation of 16S rRNA degradation (leading to ribosome degradation) during starvation. This chain is Ribonuclease PH, found in Burkholderia thailandensis (strain ATCC 700388 / DSM 13276 / CCUG 48851 / CIP 106301 / E264).